A 179-amino-acid chain; its full sequence is MCTSGQIIGSLLVLSVLEIGLGVSSVAVGAVSFSLALREHKPQLGDSSPFLLCGICGILCAKKKSGLVMILFSACCICGLIGGILNFQFLRAVTKKTSSLYPLHLASMSLACIGIGGCTLSSWLTCRLASYEQRRMFSEREHSLHHSHEMAEKRLRAIEITDLPSCPVVPPTPELPTRK.

4 helical membrane-spanning segments follow: residues 11 to 31, 44 to 61, 67 to 87, and 100 to 120; these read LLVLSVLEIGLGVSSVAVGAV, LGDSSPFLLCGICGILCA, LVMILFSACCICGLIGGILNF, and LYPLHLASMSLACIGIGGCTL.

It localises to the cytoplasm. Its subcellular location is the membrane. Functionally, acts as a tumor suppressor in lung cancer. Inhibits tumor cell growth by inhibiting cell proliferation and migration and promoting cell apoptosis. Inhibits metastasis of lung cancer by suppressing beta-catenin expression in the Wnt/beta-catenin signaling pathway. The chain is Transmembrane protein 196 (TMEM196) from Pongo abelii (Sumatran orangutan).